Reading from the N-terminus, the 173-residue chain is ATP-dependent protease subunit HslV (173 aa).

Threonine 2 is an active-site residue. Na(+) is bound by residues glycine 158, aspartate 161, and serine 164.

This sequence belongs to the peptidase T1B family. HslV subfamily. As to quaternary structure, a double ring-shaped homohexamer of HslV is capped on each side by a ring-shaped HslU homohexamer. The assembly of the HslU/HslV complex is dependent on binding of ATP.

It is found in the cytoplasm. The catalysed reaction is ATP-dependent cleavage of peptide bonds with broad specificity.. With respect to regulation, allosterically activated by HslU binding. Functionally, protease subunit of a proteasome-like degradation complex believed to be a general protein degrading machinery. The polypeptide is ATP-dependent protease subunit HslV (Mannheimia haemolytica (Pasteurella haemolytica)).